The following is a 550-amino-acid chain: Natural resistance-associated macrophage protein 1 (550 aa).

A disordered region spans residues 1 to 45 (MTGDKGPQRLSGSSYGSISSPTSPTSPGPQQAPPRETYLSEKIPI). Residues 1–58 (MTGDKGPQRLSGSSYGSISSPTSPTSPGPQQAPPRETYLSEKIPIPDTKPGTFSLRKL) are Cytoplasmic-facing. The segment covering 11–23 (SGSSYGSISSPTS) has biased composition (low complexity). Residues 59–76 (WAFTGPGFLMSIAFLDPG) form a helical membrane-spanning segment. Over 77 to 85 (NIESDLQAG) the chain is Extracellular. Residues 86-105 (AVAGFKLLWVLLWATVLGLL) form a helical membrane-spanning segment. The Cytoplasmic portion of the chain corresponds to 106-142 (CQRLAARLGVVTGKDLGEVCHLYYPKVPRTVLWLTIE). The helical transmembrane segment at 143-163 (LAIVGSDMQEVIGTAIAFNLL) threads the bilayer. Over 164–167 (SAGR) the chain is Extracellular. Residues 168-187 (IPLWGGVLITIVDTFFFLFL) form a helical membrane-spanning segment. Topologically, residues 188–196 (DNYGLRKLE) are cytoplasmic. The helical transmembrane segment at 197-217 (AFFGLLITIMALTFGYEYVVA) threads the bilayer. Topologically, residues 218–240 (RPEQGALLRGLFLPSCPGCGHPE) are extracellular. Residues 241-259 (LLQAVGIVGAIIMPHNIYL) form a helical membrane-spanning segment. Over 260-287 (HSALVKSREIDRARRADIREANMYFLIE) the chain is Cytoplasmic. The helical transmembrane segment at 288-307 (ATIALSVSFIINLFVMAVFG) threads the bilayer. The Extracellular segment spans residues 308 to 349 (QAFYQKTNQAAFNICANSSLHDYAKIFPMNNATVAVDIYQGG). N-linked (GlcNAc...) asparagine glycans are attached at residues N324 and N338. The helical transmembrane segment at 350-369 (VILGCLFGPAALYIWAIGLL) threads the bilayer. The Cytoplasmic segment spans residues 370-400 (AAGQSSTMTGTYAGQFVMEGFLRLRWSRFAR). Residues 401 to 418 (VLLTRSCAILPTVLVAVF) traverse the membrane as a helical segment. Residues 419-429 (RDLRDLSGLND) are Extracellular-facing. The chain crosses the membrane as a helical span at residues 430–450 (LLNVLQSLLLPFAVLPILTFT). Topologically, residues 451-466 (SMPTLMQEFANGLLNK) are cytoplasmic. A helical membrane pass occupies residues 467–488 (VVTSSIMVLVCAINLYFVVSYL). The Extracellular segment spans residues 489–496 (PSLPHPAY). The helical transmembrane segment at 497 to 516 (FGLAALLAAAYLGLSTYLVW) threads the bilayer. Residues 517–550 (TCCLAHGATFLAHSSHHHFLYGLLEEDQKGETSG) are Cytoplasmic-facing.

Belongs to the NRAMP family. In terms of tissue distribution, macrophages; peripheral blood leukocytes, lung, spleen and liver.

It localises to the late endosome membrane. The protein resides in the lysosome membrane. The catalysed reaction is Zn(2+)(in) + H(+)(out) = Zn(2+)(out) + H(+)(in). It carries out the reaction Fe(2+)(in) + H(+)(out) = Fe(2+)(out) + H(+)(in). The enzyme catalyses Mn(2+)(in) + H(+)(out) = Mn(2+)(out) + H(+)(in). Its function is as follows. Macrophage-specific antiporter that fluxes metal ions in either direction against a proton gradient. Localized to late endosomal lysosomal membranes, delivers bivalent cations from the cytosol into these acidic compartments where they may directly affect antimicrobial activity. Involved in iron metabolism and host natural resistance to infection with intracellular parasites. Pathogen resistance involves sequestration of Fe(2+) and Mn(2+), cofactors of both prokaryotic and eukaryotic catalases and superoxide dismutases, not only to protect the macrophage against its own generation of reactive oxygen species, but to deny the cations to the pathogen for synthesis of its protective enzymes. The chain is Natural resistance-associated macrophage protein 1 from Homo sapiens (Human).